We begin with the raw amino-acid sequence, 1233 residues long: Protein Jumonji (1233 aa).

Residues 1 to 10 (MSKERPKRNI) are compositionally biased toward basic residues. Disordered regions lie at residues 1–22 (MSKERPKRNIIQKEYDDSDGIP), 65–148 (NGQS…LSKR), 165–335 (PALP…VKYT), 355–379 (ETKLNHHKPSSPVNHTISGKLESSN), 423–451 (EGLRNSKRRLEETNHIDKIQSPTKRMKGA), and 466–542 (KPLL…GWGM). Over residues 84 to 96 (SQVSSTSNDISSS) the composition is skewed to low complexity. The Nuclear localization signal motif lies at 102–108 (PSRKRPR). The span at 115-127 (FAQSQPNSPSTTP) shows a compositional bias: polar residues. A sufficient for interaction with the PRC2 complex region spans residues 139–168 (ATQISDLSKRKPKTEDFLTFLCLRGSPALP). The span at 178-191 (QDDEDEEEEEEETE) shows a compositional bias: acidic residues. Composition is skewed to polar residues over residues 195–208 (TATNNASSSCQSTP) and 216–228 (QVPNGQVFNGSSK). A compositionally biased stretch (basic and acidic residues) spans 229-262 (SLKEKEPAQKHKSKEATPGKEKNSEHKAESRKDQ). The segment covering 268–285 (HPTTNTGSSTKGLTANNH) has biased composition (polar residues). The segment covering 309 to 318 (SSPSANAASA) has biased composition (low complexity). Residues 365 to 379 (SPVNHTISGKLESSN) show a composition bias toward polar residues. Composition is skewed to basic and acidic residues over residues 423-440 (EGLRNSKRRLEETNHIDK) and 473-485 (LKKEVPEKNLERN). Residues 506 to 519 (ENASCENRSTSQAE) show a composition bias toward polar residues. Positions 520 to 535 (SLHKPQDSMGKHEKGS) are enriched in basic and acidic residues. Positions 546-587 (IPILRPSTKEFHDPLIYIESVRAQVEKYGMCRVIPPPDWRPE) constitute a JmjN domain. The 93-residue stretch at 610 to 702 (WGPNVQRLAC…YLLSYDSLSP (93 aa)) folds into the ARID domain. The GSGFP motif signature appears at 863–867 (GSGFP). The 165-residue stretch at 873–1037 (PFSRHGWNLT…MGFKTAKEMK (165 aa)) folds into the JmjC domain. The disordered stretch occupies residues 1197-1233 (ENCISKPTPKRGPRKRATVDVPSSRLSSSSSSKSASS). The segment covering 1219 to 1233 (SSRLSSSSSSKSASS) has biased composition (low complexity).

It belongs to the JARID2 family. Associates with the PRC2 complex.

It localises to the nucleus. Its function is as follows. Regulator of histone methyltransferase complexes that plays an essential role in embryonic development, including heart and liver development, neural tube fusion process and hematopoiesis. Acts as an accessory subunit for the core PRC2 (Polycomb repressive complex 2) complex, which mediates histone H3K27 (H3K27me3) trimethylation on chromatin. Binds DNA and mediates the recruitment of the PRC2 complex to target genes in embryonic stem cells, thereby playing a key role in stem cell differentiation and normal embryonic development. In cardiac cells, it is required to repress expression of cyclin-D1 (CCND1) by activating methylation of 'Lys-9' of histone H3 (H3K9me) by the GLP1/EHMT1 and G9a/EHMT2 histone methyltransferases. Also acts as a transcriptional repressor of ANF via its interaction with GATA4 and NKX2-5. Participates in the negative regulation of cell proliferation signaling. Does not have histone demethylase activity. In Gallus gallus (Chicken), this protein is Protein Jumonji (JARID2).